We begin with the raw amino-acid sequence, 499 residues long: UDP-N-acetylmuramoyl-L-alanyl-D-glutamate--2,6-diaminopimelate ligase (499 aa).

Ser32 is a UDP-N-acetyl-alpha-D-muramoyl-L-alanyl-D-glutamate binding site. 117–123 (GTNGKTT) contributes to the ATP binding site. UDP-N-acetyl-alpha-D-muramoyl-L-alanyl-D-glutamate is bound by residues 159–160 (TT), Ser186, Gln192, and Arg194. Lys226 is modified (N6-carboxylysine). Residues Arg394, 418 to 421 (DNPR), Gly469, and Glu473 each bind meso-2,6-diaminopimelate. The short motif at 418–421 (DNPR) is the Meso-diaminopimelate recognition motif element.

It belongs to the MurCDEF family. MurE subfamily. It depends on Mg(2+) as a cofactor. Carboxylation is probably crucial for Mg(2+) binding and, consequently, for the gamma-phosphate positioning of ATP.

The protein localises to the cytoplasm. The enzyme catalyses UDP-N-acetyl-alpha-D-muramoyl-L-alanyl-D-glutamate + meso-2,6-diaminopimelate + ATP = UDP-N-acetyl-alpha-D-muramoyl-L-alanyl-gamma-D-glutamyl-meso-2,6-diaminopimelate + ADP + phosphate + H(+). It participates in cell wall biogenesis; peptidoglycan biosynthesis. Catalyzes the addition of meso-diaminopimelic acid to the nucleotide precursor UDP-N-acetylmuramoyl-L-alanyl-D-glutamate (UMAG) in the biosynthesis of bacterial cell-wall peptidoglycan. The sequence is that of UDP-N-acetylmuramoyl-L-alanyl-D-glutamate--2,6-diaminopimelate ligase from Synechococcus sp. (strain WH7803).